A 611-amino-acid polypeptide reads, in one-letter code: Elongation factor 4 1 (611 aa).

Residues 11–193 (QHIRNFSIVA…QIVHKIPAPQ (183 aa)) enclose the tr-type G domain. GTP is bound by residues 23 to 28 (DHGKST) and 140 to 143 (NKID).

This sequence belongs to the TRAFAC class translation factor GTPase superfamily. Classic translation factor GTPase family. LepA subfamily.

Its subcellular location is the cell membrane. It catalyses the reaction GTP + H2O = GDP + phosphate + H(+). Required for accurate and efficient protein synthesis under certain stress conditions. May act as a fidelity factor of the translation reaction, by catalyzing a one-codon backward translocation of tRNAs on improperly translocated ribosomes. Back-translocation proceeds from a post-translocation (POST) complex to a pre-translocation (PRE) complex, thus giving elongation factor G a second chance to translocate the tRNAs correctly. Binds to ribosomes in a GTP-dependent manner. The protein is Elongation factor 4 1 of Lactiplantibacillus plantarum (strain ATCC BAA-793 / NCIMB 8826 / WCFS1) (Lactobacillus plantarum).